We begin with the raw amino-acid sequence, 148 residues long: UPF0179 protein Mboo_1959 (148 aa).

This sequence belongs to the UPF0179 family.

The sequence is that of UPF0179 protein Mboo_1959 from Methanoregula boonei (strain DSM 21154 / JCM 14090 / 6A8).